The sequence spans 401 residues: Mu-type opioid receptor (401 aa).

Topologically, residues 1–69 (MDSSAVPANA…CPPTGSPSMI (69 aa)) are extracellular. N-linked (GlcNAc...) asparagine glycans are attached at residues Asn9, Asn12, Asn34, Asn41, and Asn49. Residues 70–94 (TAITIMALYSIVCVVGLFGNFLVMY) traverse the membrane as a helical segment. Residues 95–107 (VIVRYTKMKTATN) lie on the Cytoplasmic side of the membrane. A helical transmembrane segment spans residues 108–132 (IYIFNLALADALATSTLPFQSVNYL). Residues 133–143 (MGTWPFGTILC) lie on the Extracellular side of the membrane. A disulfide bond links Cys143 and Cys220. The chain crosses the membrane as a helical span at residues 144 to 166 (KIVISIDYYNMFTSIFTLCTMSV). Residues 167–186 (DRYIAVCHPVKALDFRTPRN) are Cytoplasmic-facing. Tyr169 bears the Phosphotyrosine mark. The chain crosses the membrane as a helical span at residues 187–208 (AKIINVCNWILSSAIGLPVMFM). Topologically, residues 209–231 (ATTKYRHGSIDCTLTFSHPTWYW) are extracellular. The chain crosses the membrane as a helical span at residues 232–256 (ENLLKICVFIFAFIMPVLIITVCYG). The Cytoplasmic portion of the chain corresponds to 257 to 280 (LMILRLKSVRMLSGSKEKDRNLRR). The helical transmembrane segment at 281–307 (ITRMVLVVVAVFIVCWTPIHIYVIIKA) threads the bilayer. The Extracellular portion of the chain corresponds to 308-315 (LVTIPETT). A helical transmembrane segment spans residues 316-339 (FQTVSWHFCIALGYTNSCLNPVLY). The NPxxY; plays a role in stabilizing the activated conformation of the receptor motif lies at 335 to 339 (NPVLY). At 340 to 401 (AFLDENFKRC…NLEAETAPLP (62 aa)) the chain is on the cytoplasmic side. Cys354 is lipidated: S-palmitoyl cysteine. The interval 365 to 388 (NSTRIRQNTRDHPSTANTVDRTNH) is disordered. Ser366 carries the phosphoserine modification. Residue Thr373 is modified to Phosphothreonine. At Ser378 the chain carries Phosphoserine. Thr397 is subject to Phosphothreonine.

Belongs to the G-protein coupled receptor 1 family. In terms of assembly, forms homooligomers and heterooligomers with other GPCRs, such as OPRD1, OPRK1, OPRL1, NPFFR2, ADRA2A, SSTR2, CNR1 and CCR5 (probably in dimeric forms). Interacts with heterotrimeric G proteins; interaction with a heterotrimeric complex containing GNAI1, GNB1 and GNG2 stabilizes the active conformation of the receptor and increases its affinity for endomorphin-2, the synthetic opioid peptide DAMGO and for morphinan agonists. Interacts with PPL; the interaction disrupts agonist-mediated G-protein activation. Interacts (via C-terminus) with DNAJB4 (via C-terminus). Interacts with calmodulin; the interaction inhibits the constitutive activity of OPRM1; it abolishes basal and attenuates agonist-stimulated G-protein coupling. Interacts with FLNA, PLD2, RANBP9 and WLS and GPM6A. Interacts with RTP4. Interacts with SYP and GNAS. Interacts with RGS9, RGS17, RGS20, RGS4, PPP1R9B and HINT1. In terms of processing, phosphorylated. Differentially phosphorylated in basal and agonist-induced conditions. Agonist-mediated phosphorylation modulates receptor internalization. Phosphorylated by GRK2 in a agonist-dependent manner. Phosphorylation at Tyr-169 requires receptor activation, is dependent on non-receptor protein tyrosine kinase Src and results in a decrease in agonist efficacy by reducing G-protein coupling efficiency. Phosphorylated on tyrosine residues; the phosphorylation is involved in agonist-induced G-protein-independent receptor down-regulation. Phosphorylation at Ser-378 is involved in G-protein-dependent but not beta-arrestin-dependent activation of the ERK pathway. Post-translationally, ubiquitinated. A basal ubiquitination seems not to be related to degradation. Ubiquitination is increased upon formation of OPRM1:OPRD1 oligomers leading to proteasomal degradation; the ubiquitination is diminished by RTP4.

The protein localises to the cell membrane. Its subcellular location is the cell projection. The protein resides in the axon. It is found in the perikaryon. It localises to the dendrite. The protein localises to the endosome. Its function is as follows. Receptor for endogenous opioids such as beta-endorphin and endomorphin. Receptor for natural and synthetic opioids including morphine, heroin, DAMGO, fentanyl, etorphine, buprenorphin and methadone. Also activated by enkephalin peptides, such as Met-enkephalin or Met-enkephalin-Arg-Phe, with higher affinity for Met-enkephalin-Arg-Phe. Agonist binding to the receptor induces coupling to an inactive GDP-bound heterotrimeric G-protein complex and subsequent exchange of GDP for GTP in the G-protein alpha subunit leading to dissociation of the G-protein complex with the free GTP-bound G-protein alpha and the G-protein beta-gamma dimer activating downstream cellular effectors. The agonist- and cell type-specific activity is predominantly coupled to pertussis toxin-sensitive G(i) and G(o) G alpha proteins, GNAI1, GNAI2, GNAI3 and GNAO1, and to a lesser extent to pertussis toxin-insensitive G alpha proteins GNAZ and GNA15. They mediate an array of downstream cellular responses, including inhibition of adenylate cyclase activity and both N-type and L-type calcium channels, activation of inward rectifying potassium channels, mitogen-activated protein kinase (MAPK), phospholipase C (PLC), phosphoinositide/protein kinase (PKC), phosphoinositide 3-kinase (PI3K) and regulation of NF-kappa-B. Also couples to adenylate cyclase stimulatory G alpha proteins. The selective temporal coupling to G-proteins and subsequent signaling can be regulated by RGSZ proteins, such as RGS9, RGS17 and RGS4. Phosphorylation by members of the GPRK subfamily of Ser/Thr protein kinases and association with beta-arrestins is involved in short-term receptor desensitization. Beta-arrestins associate with the GPRK-phosphorylated receptor and uncouple it from the G-protein thus terminating signal transduction. The phosphorylated receptor is internalized through endocytosis via clathrin-coated pits which involves beta-arrestins. The activation of the ERK pathway occurs either in a G-protein-dependent or a beta-arrestin-dependent manner and is regulated by agonist-specific receptor phosphorylation. Acts as a class A G-protein coupled receptor (GPCR) which dissociates from beta-arrestin at or near the plasma membrane and undergoes rapid recycling. Receptor down-regulation pathways are varying with the agonist and occur dependent or independent of G-protein coupling. Endogenous ligands induce rapid desensitization, endocytosis and recycling. Heterooligomerization with other GPCRs can modulate agonist binding, signaling and trafficking properties. Involved in neurogenesis. This is Mu-type opioid receptor (OPRM1) from Pan troglodytes (Chimpanzee).